The chain runs to 238 residues: uncharacterized protein (238 aa).

Belongs to the chlamydial CPn_0658/CT_538/TC_0825 family.

This is an uncharacterized protein from Chlamydia trachomatis serovar D (strain ATCC VR-885 / DSM 19411 / UW-3/Cx).